Here is a 518-residue protein sequence, read N- to C-terminus: Putative succinate-semialdehyde dehydrogenase [NADP(+)] 2 (518 aa).

NADP(+) is bound by residues Trp-157–Asn-158, Lys-181–Ser-184, and Gly-232–Ser-233. Catalysis depends on Glu-254, which acts as the Proton acceptor. NADP(+) is bound at residue Leu-255. Cys-288 serves as the catalytic Nucleophile. Residue Glu-386 participates in NADP(+) binding.

The protein belongs to the aldehyde dehydrogenase family.

It catalyses the reaction succinate semialdehyde + NADP(+) + H2O = succinate + NADPH + 2 H(+). Catalyzes the NADP(+)-dependent oxidation of succinate semialdehyde to succinate. Although it has succinate semialdehyde dehydrogenase activity, is likely to act physiologically on a different aldehyde(s). This Mycobacterium bovis (strain ATCC BAA-935 / AF2122/97) protein is Putative succinate-semialdehyde dehydrogenase [NADP(+)] 2 (gabD2).